We begin with the raw amino-acid sequence, 235 residues long: Small ribosomal subunit protein eS4 (235 aa).

One can recognise an S4 RNA-binding domain in the interval 37 to 110 (LPLGLIIRDV…KGRLVLYKLN (74 aa)).

This sequence belongs to the eukaryotic ribosomal protein eS4 family.

This chain is Small ribosomal subunit protein eS4, found in Methanosarcina mazei (strain ATCC BAA-159 / DSM 3647 / Goe1 / Go1 / JCM 11833 / OCM 88) (Methanosarcina frisia).